We begin with the raw amino-acid sequence, 89 residues long: Bombyxin B-2 (89 aa).

A signal peptide spans 1–19 (MKTSVMFMLVFVISLMCSS). Cystine bridges form between C29-C75, C41-C88, and C74-C79. Residues 48–66 (SGAQYAPYFWTRQYLGSRG) constitute a propeptide, c peptide like.

Belongs to the insulin family. In terms of assembly, heterodimer of a B chain and an A chain linked by two disulfide bonds.

The protein localises to the secreted. Brain peptide responsible for activation of prothoracic glands to produce ecdysone in insects. The sequence is that of Bombyxin B-2 (BBXB2) from Bombyx mori (Silk moth).